The chain runs to 692 residues: ATP-dependent DNA helicase DinG (692 aa).

In terms of domain architecture, Helicase ATP-binding spans 16 to 293 (NLGNQLDNFI…AELAEYKKAA (278 aa)). 56 to 63 (AGTGIGKS) provides a ligand contact to ATP. Residue C123 coordinates [4Fe-4S] cluster. The short motif at 134–137 (NNDQ) is the DEAH box element. C192 and C202 together coordinate [4Fe-4S] cluster. A DEAH box motif is present at residues 247–250 (DEAH). A Helicase C-terminal domain is found at 514 to 692 (LIKTLPEYLE…PPFKRVIEYS (179 aa)).

Belongs to the helicase family. DinG subfamily. Type 1 sub-subfamily. Requires [4Fe-4S] cluster as cofactor.

The enzyme catalyses Couples ATP hydrolysis with the unwinding of duplex DNA at the replication fork by translocating in the 5'-3' direction. This creates two antiparallel DNA single strands (ssDNA). The leading ssDNA polymer is the template for DNA polymerase III holoenzyme which synthesizes a continuous strand.. The catalysed reaction is ATP + H2O = ADP + phosphate + H(+). In terms of biological role, DNA-dependent ATPase and 5'-3' DNA helicase. Unwinds D-loops, R-loops, forked DNA and G-quadruplex DNA. The protein is ATP-dependent DNA helicase DinG of Photobacterium profundum (strain SS9).